Here is a 434-residue protein sequence, read N- to C-terminus: Putative DD-carboxypeptidase TP_0574 (434 aa).

The signal sequence occupies residues 1–19; sequence MKVKYALLSAGALQLLVVG. Residue Cys20 is the site of N-palmitoyl cysteine attachment. Cys20 carries the S-diacylglycerol cysteine lipid modification.

As to quaternary structure, probably a monomer; a non-lipidated construct (residues 22-434) is monomeric in solution but crystallizes as a homodimer. Requires Zn(2+) as cofactor. In terms of processing, the N-terminus is blocked. Present as a doublet of low abundance 48 kDa and high abundance 47 kDa proteins. The longer form is probably due to readthrough of the stop codon; the extra amino acids at the C-terminus would be X-Lys-Arg-Gly-Val-Leu-Ser-Arg-Val-Ser, a peptide antibody against this sequence detects only the 48 kDa form.

Its subcellular location is the cell inner membrane. In terms of biological role, a possible D,D-carboxypeptidase, that releases amino acids sequentially from a proteins C-terminus. Has zinc-dependent carboxypeptidase activity on synthetic depsipeptide substrates. May serve to decrease cross-linking of peptidoglycan, promoting the highly sinusous motility of this spirochaete. Overexpression of the whole protein in E.coli leads to aberrant cell morphology and extrusion of the cytoplasm, while overexpression of a construct with the first 62 resides of the protein fused to PhoA does have this effect, suggesting the whole protein, not the lipoprotein moiety, is toxic. Binds penicillin. Penicillin binding is covalent, does not require lipidation, and is zinc-dependent. While this protein has beta-lactamase activity in vitro, that is probably not its role in vivo, as T.pallidum is very sensitive to penicillin antibiotics. Its function is as follows. A pathogen-specific membrane antigen. Most abundant of the membrane lipoproteins, only found in pathogenic treponemes, suggesting that it is an important structural moiety in the cell envelope of virulent treponemal subspecies. A lipopeptide corresponding to the first 6 mature residues induces host (human and mouse) cytokine release by monocyte cell lines via TLR2 and CD14; nonlipidated protein does not stimulate host cells. Stimulates host (human) dendritic cell maturation to become MHC class II-positive antigen presenting cells via TLR2, which depends on lipidation; nonlipidated protein does not stimulate maturation. This is Putative DD-carboxypeptidase TP_0574 from Treponema pallidum (strain Nichols).